We begin with the raw amino-acid sequence, 380 residues long: 3-dehydroquinate synthase (380 aa).

Belongs to the archaeal-type DHQ synthase family.

It catalyses the reaction 2-amino-2,3,7-trideoxy-D-lyxo-hept-6-ulosonate + NAD(+) + H2O = 3-dehydroquinate + NH4(+) + NADH + H(+). Functionally, catalyzes the oxidative deamination and cyclization of 2-amino-3,7-dideoxy-D-threo-hept-6-ulosonic acid (ADH) to yield 3-dehydroquinate (DHQ), which is fed into the canonical shikimic pathway of aromatic amino acid biosynthesis. The chain is 3-dehydroquinate synthase from Methanosarcina mazei (strain ATCC BAA-159 / DSM 3647 / Goe1 / Go1 / JCM 11833 / OCM 88) (Methanosarcina frisia).